Consider the following 118-residue polypeptide: NADH-ubiquinone oxidoreductase chain 3 (118 aa).

3 consecutive transmembrane segments (helical) span residues 9-29 (IYLV…FLFA), 62-82 (LVSI…PWAV), and 87-107 (IDLF…IGFL).

The protein belongs to the complex I subunit 3 family.

It localises to the mitochondrion membrane. It carries out the reaction a ubiquinone + NADH + 5 H(+)(in) = a ubiquinol + NAD(+) + 4 H(+)(out). Functionally, core subunit of the mitochondrial membrane respiratory chain NADH dehydrogenase (Complex I) that is believed to belong to the minimal assembly required for catalysis. Complex I functions in the transfer of electrons from NADH to the respiratory chain. The immediate electron acceptor for the enzyme is believed to be ubiquinone. This Pinus sylvestris (Scotch pine) protein is NADH-ubiquinone oxidoreductase chain 3 (NAD3).